The primary structure comprises 491 residues: FAD-dependent monooxygenase cle3 (491 aa).

5 residues coordinate FAD: Glu55, Gly69, Arg128, Asp330, and Ala343. An N-linked (GlcNAc...) asparagine glycan is attached at Asn380. A helical transmembrane segment spans residues 462-482; that stretch reads STVVWTSLGILGLVVFLFLLF.

It belongs to the paxM FAD-dependent monooxygenase family. Requires FAD as cofactor.

Its subcellular location is the membrane. It functions in the pathway secondary metabolite biosynthesis; terpenoid biosynthesis. Functionally, FAD-dependent monooxygenase; part of the cluster A that mediates the biosynthesis of chevalone E and its oxidized derivatives that possess a unique five-membered lactone ring and can synergistically enhance the cytotoxicity of doxorubicin (DOX) in breast cancer cells. Within the pathway, cle3 takes part to the biosynthesis of the molecular scaffold by catalyzing the formation of an (S)-epoxide ring at the terminal olefin of the geranylgeranyl group. The molecular scaffold is commonly biosynthesized by a series of enzymes including the non-reducing polyketide synthase (NR-PKS) cle1 that produces the alpha-pyrone triacetic acid lactone (TAL); The membrane-bound prenyltransferase cle5 that accepts TAL as its substrate to perform a C-3 geranylgeranylation reaction, in which the pathway-dedicated GGPS cle6 is required to provide GGPP, the other substrate of cle5; the FAD-dependent monooxygenase Cle3 that forms an (S)-epoxide ring at the terminal olefin of the geranylgeranyl group; and the terpene cyclase Cle7 that catalyzes the cyclization of the prenyl group that yields the pentacyclic pathway intermediate chevalone E. Chevalone E can derivatize into seven new oxidized analogs by the cytochrome P450 monooxygenases cle2 (acting at C-20) and cle4 (acting at C-11 and C-12). This Aspergillus versicolor protein is FAD-dependent monooxygenase cle3.